A 63-amino-acid polypeptide reads, in one-letter code: MNYTDLKDKNLNELQVLLKEKKVLLFELKAKLKTMQLTNTSELRATKKDIAKIQTALTAVKAN.

The protein belongs to the universal ribosomal protein uL29 family.

The polypeptide is Large ribosomal subunit protein uL29 (Aliarcobacter butzleri (strain RM4018) (Arcobacter butzleri)).